The sequence spans 388 residues: Probable aspartic-type endopeptidase MCYG_06955 (388 aa).

Positions 1-21 are cleaved as a signal peptide; that stretch reads MMGPFFYFTAYVSLLFAFTQA. N-linked (GlcNAc...) asparagine glycosylation is found at N82 and N104. One can recognise a Peptidase A1 domain in the interval 96 to 384; it reads FVNEITVGND…DYDGPKIGFA (289 aa). D112 is an active-site residue. 2 N-linked (GlcNAc...) asparagine glycosylation sites follow: N209 and N261. The active site involves D278. N315 and N320 each carry an N-linked (GlcNAc...) asparagine glycan.

The protein belongs to the peptidase A1 family.

It is found in the secreted. In terms of biological role, probable aspartic-type endopeptidase which contributes to virulence. The polypeptide is Probable aspartic-type endopeptidase MCYG_06955 (Arthroderma otae (strain ATCC MYA-4605 / CBS 113480) (Microsporum canis)).